Reading from the N-terminus, the 172-residue chain is Ribosome maturation factor RimM (172 aa).

The PRC barrel domain occupies 96 to 169; it reads EGYFYHFQLQ…RMEIKLLPGL (74 aa).

This sequence belongs to the RimM family. In terms of assembly, binds ribosomal protein uS19.

Its subcellular location is the cytoplasm. An accessory protein needed during the final step in the assembly of 30S ribosomal subunit, possibly for assembly of the head region. Essential for efficient processing of 16S rRNA. May be needed both before and after RbfA during the maturation of 16S rRNA. It has affinity for free ribosomal 30S subunits but not for 70S ribosomes. This is Ribosome maturation factor RimM from Syntrophomonas wolfei subsp. wolfei (strain DSM 2245B / Goettingen).